Here is a 561-residue protein sequence, read N- to C-terminus: uncharacterized protein (561 aa).

Positions M1–C24 are cleaved as a signal peptide. Over K25–Q509 the chain is Lumenal. The chain crosses the membrane as a helical span at residues Y510 to N530. At R531–D561 the chain is on the cytoplasmic side.

The protein resides in the endoplasmic reticulum membrane. The protein localises to the golgi apparatus membrane. This is an uncharacterized protein from Schizosaccharomyces pombe (strain 972 / ATCC 24843) (Fission yeast).